We begin with the raw amino-acid sequence, 313 residues long: Ribosomal RNA small subunit methyltransferase H (313 aa).

S-adenosyl-L-methionine is bound by residues 35–37 (GGH), Asp-55, Phe-80, Asp-102, and Gln-109.

Belongs to the methyltransferase superfamily. RsmH family.

Its subcellular location is the cytoplasm. The catalysed reaction is cytidine(1402) in 16S rRNA + S-adenosyl-L-methionine = N(4)-methylcytidine(1402) in 16S rRNA + S-adenosyl-L-homocysteine + H(+). In terms of biological role, specifically methylates the N4 position of cytidine in position 1402 (C1402) of 16S rRNA. The chain is Ribosomal RNA small subunit methyltransferase H from Shewanella violacea (strain JCM 10179 / CIP 106290 / LMG 19151 / DSS12).